We begin with the raw amino-acid sequence, 150 residues long: Large ribosomal subunit protein bL9 (150 aa).

Belongs to the bacterial ribosomal protein bL9 family.

Its function is as follows. Binds to the 23S rRNA. This chain is Large ribosomal subunit protein bL9, found in Streptococcus agalactiae serotype Ia (strain ATCC 27591 / A909 / CDC SS700).